We begin with the raw amino-acid sequence, 224 residues long: Mammalian ependymin-related protein 1 (224 aa).

An N-terminal signal peptide occupies residues 1-37 (MLTRAPRRLVQGPRETWLLGGLWVWILCGLGMAGSPG). 3 cysteine pairs are disulfide-bonded: Cys-42–Cys-172, Cys-88–Cys-222, and Cys-113–Cys-210. 2 N-linked (GlcNAc...) asparagine glycosylation sites follow: Asn-130 and Asn-182.

It belongs to the ependymin family. Homodimer. N-glycosylated; the glycan contains mannose-6-phosphate moieties. In terms of tissue distribution, detected in brain (at protein level).

The protein localises to the lysosome lumen. The protein resides in the secreted. Functionally, binds anionic lipids and gangliosides at acidic pH. This is Mammalian ependymin-related protein 1 (Epdr1) from Rattus norvegicus (Rat).